Consider the following 322-residue polypeptide: Cytochrome c biogenesis protein CcsA (322 aa).

Transmembrane regions (helical) follow at residues 2–22 (LFAT…SIVI), 44–64 (GMIA…LSSG), 68–88 (LSNL…LHTI), 143–163 (MLLS…ILII), 226–246 (VISL…VWAN), 260–274 (TWAF…IYLH), and 289–309 (VASI…LLGI).

This sequence belongs to the CcmF/CycK/Ccl1/NrfE/CcsA family. May interact with Ccs1.

The protein resides in the plastid. It localises to the chloroplast thylakoid membrane. Required during biogenesis of c-type cytochromes (cytochrome c6 and cytochrome f) at the step of heme attachment. This chain is Cytochrome c biogenesis protein CcsA, found in Brachypodium distachyon (Purple false brome).